The primary structure comprises 5207 residues: NBPF family member NBPF20 (5207 aa).

Olduvai domains are found at residues 5–77 (SREL…PSCP), 80–135 (SREL…LDVD), 136–228 (RTKK…RSKK), 229–321 (ERRR…PSCP), 324–379 (SREL…LDVD), 380–472 (RTKK…RSKK), 473–565 (ERRR…PSCP), 568–623 (SREL…LDVD), 624–716 (RTKK…RSKK), 717–809 (ERRR…PSCP), 812–867 (SREL…LDVD), 868–960 (RTKK…RSKK), 961–1053 (ERRR…PSCP), 1056–1111 (SREL…LDVD), 1112–1204 (RTKK…RSKK), 1205–1297 (ERRR…PSCP), 1300–1355 (SREL…LDVD), 1356–1448 (RTKK…RSKK), 1449–1541 (ERRR…PSCP), 1544–1599 (SREL…LDVD), 1600–1692 (RTKK…RSKK), 1693–1785 (ERRR…PSCP), 1788–1843 (SREL…LDVD), 1844–1936 (RTKK…RSKK), 1937–2029 (ERRR…PSCP), 2032–2087 (SREL…LDVD), 2088–2180 (RTKK…RSKK), 2181–2273 (ERRR…PSCP), 2276–2331 (SREL…LDVD), 2332–2424 (RTKK…RSKK), 2425–2517 (ERRR…PSCP), 2520–2575 (SREL…LDVD), 2576–2668 (RTKK…RSKK), 2669–2761 (ERRR…PSCP), 2764–2819 (SREL…LDVD), 2820–2912 (RTKK…RSKK), 2913–3005 (ERRR…PSCP), 3008–3063 (SREL…LDVD), 3064–3156 (RTKK…RSKK), 3157–3249 (ERRR…PSCP), 3252–3307 (SREL…LDVD), 3308–3400 (RTKK…RSKK), 3401–3493 (ERRR…PSCP), 3496–3551 (SREL…LDVD), 3552–3644 (RTKK…RSKK), 3645–3737 (ERRR…PSCP), 3740–3795 (SREL…LDVD), 3796–3888 (RTKK…RSKK), 3889–3981 (ERRR…PSCP), 3984–4039 (SREL…LDVD), 4040–4132 (RTKK…RSKK), 4133–4225 (ERRR…PSCP), 4228–4283 (SREL…LDVD), 4284–4376 (RTKK…RSKK), 4377–4452 (ERRR…LDVD), 4453–4545 (RTKK…RSKK), 4546–4621 (ERRR…LDVD), 4622–4713 (RTKK…PSCP), 4716–4771 (SREL…LDVD), 4772–4864 (RTKK…RSKK), 4865–4957 (ERRR…PSCP), 4960–5015 (SREL…LDVD), 5016–5108 (RTKK…RSKK), and 5109–5207 (KRRR…IFPQ). 2 disordered regions span residues 137-157 (TKKD…LSRE) and 215-256 (KGKG…LDEK). Over residues 216–234 (GKGKKRRGRRSKKERRRGR) the composition is skewed to basic residues. Disordered stretches follow at residues 381 to 403 (TKKD…RELL) and 459 to 513 (KGKG…DRSY). The span at 460–478 (GKGKKRRGRRSKKERRRGR) shows a compositional bias: basic residues. Residues 492 to 502 (LSRELLDEKGP) show a composition bias toward basic and acidic residues. Disordered regions lie at residues 625-647 (TKKD…RELL) and 703-744 (KGKG…LDEK). Over residues 704–722 (GKGKKRRGRRSKKERRRGR) the composition is skewed to basic residues. Disordered regions lie at residues 869 to 891 (TKKD…RELL) and 947 to 1001 (KGKG…DRSY). Residues 948–966 (GKGKKRRGRRSKKERRRGR) are compositionally biased toward basic residues. Residues 980–990 (LSRELLDEKGP) are compositionally biased toward basic and acidic residues. 2 disordered regions span residues 1113–1135 (TKKD…RELL) and 1191–1245 (KGKG…DRSY). The span at 1192-1210 (GKGKKRRGRRSKKERRRGR) shows a compositional bias: basic residues. Positions 1224 to 1234 (LSRELLDEKGP) are enriched in basic and acidic residues. 2 disordered regions span residues 1357 to 1379 (TKKD…RELL) and 1435 to 1489 (KGKG…DRSY). Over residues 1436–1454 (GKGKKRRGRRSKKERRRGR) the composition is skewed to basic residues. Residues 1468–1478 (LSRELLDEKGP) show a composition bias toward basic and acidic residues. 2 disordered regions span residues 1601 to 1623 (TKKD…RELL) and 1679 to 1733 (KGKG…DRSY). Basic residues predominate over residues 1680–1698 (GKGKKRRGRRSKKERRRGR). The segment covering 1712–1722 (LSRELLDEKGP) has biased composition (basic and acidic residues). 2 disordered regions span residues 1845–1867 (TKKD…RELL) and 1923–1964 (KGKG…LDEK). The span at 1924–1942 (GKGKKRRGRRSKKERRRGR) shows a compositional bias: basic residues. 2 disordered regions span residues 2089–2111 (TKKD…RELL) and 2167–2208 (KGKG…LDEK). Basic residues predominate over residues 2168-2186 (GKGKKRRGRRSKKERRRGR). Disordered regions lie at residues 2333–2355 (TKKD…RELL) and 2411–2452 (KGKG…LDEK). Residues 2412-2430 (GKGKKRRGRRSKKERRRGR) show a composition bias toward basic residues. Disordered stretches follow at residues 2577-2599 (TKKD…RELL) and 2655-2709 (KGKG…DRSY). The span at 2656-2674 (GKGKKRRGRRSKKERRRGR) shows a compositional bias: basic residues. Basic and acidic residues predominate over residues 2688 to 2698 (LSRELLDEKGP). Disordered stretches follow at residues 2821–2843 (TKKD…RELL) and 2899–2953 (KGKG…DRSY). The span at 2900–2918 (GKGKKRRGRRSKKERRRGR) shows a compositional bias: basic residues. The segment covering 2932–2942 (LSRELLDEKGP) has biased composition (basic and acidic residues). Disordered stretches follow at residues 3065-3087 (TKKD…RELL) and 3143-3197 (KGKG…DRSY). Positions 3144-3162 (GKGKKRRGRRSKKERRRGR) are enriched in basic residues. Positions 3176 to 3186 (LSRELLDEKGP) are enriched in basic and acidic residues. Disordered regions lie at residues 3309–3331 (TKKD…RELL) and 3387–3441 (KGKG…DRSY). Over residues 3388-3406 (GKGKKRRGRRSKKERRRGR) the composition is skewed to basic residues. Positions 3420–3430 (LSRELLDEKGP) are enriched in basic and acidic residues. Disordered stretches follow at residues 3553–3575 (TKKD…RELL) and 3631–3672 (KGKG…LDEK). A compositionally biased stretch (basic residues) spans 3632–3650 (GKGKKRRGRRSKKERRRGR). Disordered stretches follow at residues 3797-3819 (TKKD…RELL) and 3875-3916 (KGKG…LDEK). A compositionally biased stretch (basic residues) spans 3876-3894 (GKGKKRRGRRSKKERRRGR). 2 disordered regions span residues 4041-4063 (TKKD…RELL) and 4119-4160 (KGKG…LDEK). Residues 4120–4138 (GKGKKRRGRRSKKERRRGR) are compositionally biased toward basic residues. Disordered stretches follow at residues 4285-4307 (TKKD…RELL), 4361-4404 (EKKG…LDEK), 4453-4474 (RTKK…LSRE), and 4530-4573 (EKKG…LDEK). Residues 4364–4382 (GKGKKRRGRRSKKERRRGR) show a composition bias toward basic residues. Positions 4533–4551 (GKGKKRRGRRSKKERRRGR) are enriched in basic residues. Disordered stretches follow at residues 4773 to 4793 (TKKD…LSRE) and 4851 to 4889 (KGKG…RELL). Basic residues predominate over residues 4852–4870 (GKGKKRRGRRSKKERRRGR). 2 disordered regions span residues 5017 to 5037 (TKKD…LSRE) and 5094 to 5128 (KKGK…CPRL). Positions 5096–5114 (GKGKKRRGRRSKKKRRRGR) are enriched in basic residues.

This sequence belongs to the NBPF family.

It localises to the cytoplasm. In Homo sapiens (Human), this protein is NBPF family member NBPF20.